Consider the following 349-residue polypeptide: Glycerol-3-phosphate dehydrogenase [NAD(+)], cytoplasmic (349 aa).

NAD(+)-binding positions include 10–15 (GSGNWG), Phe-41, and Phe-97. Lys-120 is a substrate binding site. NAD(+) is bound at residue Ala-153. Ser-154 carries the phosphoserine modification. The active-site Proton acceptor is Lys-204. Arg-269 contacts NAD(+). 269 to 270 (RN) contacts substrate. N6-succinyllysine is present on Lys-289. Lys-296 and Gln-298 together coordinate NAD(+). Tyr-326 bears the Phosphotyrosine mark.

The protein belongs to the NAD-dependent glycerol-3-phosphate dehydrogenase family. As to quaternary structure, homodimer. Expressed in liver (at protein level).

It is found in the cytoplasm. It carries out the reaction sn-glycerol 3-phosphate + NAD(+) = dihydroxyacetone phosphate + NADH + H(+). With respect to regulation, inhibited by zinc ions and sulfate. In terms of biological role, has glycerol-3-phosphate dehydrogenase activity. This chain is Glycerol-3-phosphate dehydrogenase [NAD(+)], cytoplasmic, found in Homo sapiens (Human).